Consider the following 342-residue polypeptide: 3-isopropylmalate dehydrogenase (342 aa).

Residues Arg-87, Arg-97, Arg-121, and Asp-212 each coordinate substrate. Residues Asp-212, Asp-236, and Asp-240 each coordinate Mg(2+). 272-284 contacts NAD(+); sequence GSAPDIAGRQLAD. Residues 319–328 show a composition bias toward low complexity; it reads RAAAGAAQPS. The disordered stretch occupies residues 319–342; sequence RAAAGAAQPSTRERGEDLAARAAG. Positions 329 to 342 are enriched in basic and acidic residues; it reads TRERGEDLAARAAG.

It belongs to the isocitrate and isopropylmalate dehydrogenases family. LeuB type 2 subfamily. As to quaternary structure, homodimer. Mg(2+) serves as cofactor. Requires Mn(2+) as cofactor.

Its subcellular location is the cytoplasm. The catalysed reaction is (2R,3S)-3-isopropylmalate + NAD(+) = 4-methyl-2-oxopentanoate + CO2 + NADH. Its pathway is amino-acid biosynthesis; L-leucine biosynthesis; L-leucine from 3-methyl-2-oxobutanoate: step 3/4. Catalyzes the oxidation of 3-carboxy-2-hydroxy-4-methylpentanoate (3-isopropylmalate) to 3-carboxy-4-methyl-2-oxopentanoate. The product decarboxylates to 4-methyl-2 oxopentanoate. This Frankia casuarinae (strain DSM 45818 / CECT 9043 / HFP020203 / CcI3) protein is 3-isopropylmalate dehydrogenase.